The sequence spans 305 residues: Sulfate adenylyltransferase subunit 2 (305 aa).

The segment at 283-305 is disordered; sequence RQGRVIDHDQSASMEKKKQEGYF.

Belongs to the PAPS reductase family. CysD subfamily. Heterodimer composed of CysD, the smaller subunit, and CysN.

The enzyme catalyses sulfate + ATP + H(+) = adenosine 5'-phosphosulfate + diphosphate. Its pathway is sulfur metabolism; hydrogen sulfide biosynthesis; sulfite from sulfate: step 1/3. Functionally, with CysN forms the ATP sulfurylase (ATPS) that catalyzes the adenylation of sulfate producing adenosine 5'-phosphosulfate (APS) and diphosphate, the first enzymatic step in sulfur assimilation pathway. APS synthesis involves the formation of a high-energy phosphoric-sulfuric acid anhydride bond driven by GTP hydrolysis by CysN coupled to ATP hydrolysis by CysD. The protein is Sulfate adenylyltransferase subunit 2 of Caulobacter sp. (strain K31).